The primary structure comprises 485 residues: T-complex protein 1 subunit theta (485 aa).

The protein belongs to the TCP-1 chaperonin family. Component of the T-complex protein 1 (TCP1) complex.

The protein localises to the cytoplasm. Its function is as follows. Molecular chaperone; assists the folding of proteins upon ATP hydrolysis. The chain is T-complex protein 1 subunit theta (CCT8) from Encephalitozoon cuniculi (strain GB-M1) (Microsporidian parasite).